Consider the following 140-residue polypeptide: Peptide methionine sulfoxide reductase MsrB (140 aa).

The 123-residue stretch at 10–132 folds into the MsrB domain; sequence EEDWKSVLTP…NSVSLGFTKE (123 aa). The Zn(2+) site is built by C49, C52, C98, and C101. The active-site Nucleophile is C121.

The protein belongs to the MsrB Met sulfoxide reductase family. Zn(2+) serves as cofactor.

The enzyme catalyses L-methionyl-[protein] + [thioredoxin]-disulfide + H2O = L-methionyl-(R)-S-oxide-[protein] + [thioredoxin]-dithiol. The chain is Peptide methionine sulfoxide reductase MsrB from Methanosarcina mazei (strain ATCC BAA-159 / DSM 3647 / Goe1 / Go1 / JCM 11833 / OCM 88) (Methanosarcina frisia).